A 163-amino-acid polypeptide reads, in one-letter code: Biotin carboxyl carrier protein of acetyl-CoA carboxylase (163 aa).

The Biotinyl-binding domain occupies 85–161; sequence GDFIVSPLVG…QFGSKLFRIV (77 aa). Lys127 carries the N6-biotinyllysine modification.

Homodimer.

Its pathway is lipid metabolism; fatty acid biosynthesis. This protein is a component of the acetyl coenzyme A carboxylase complex; first, biotin carboxylase catalyzes the carboxylation of the carrier protein and then the transcarboxylase transfers the carboxyl group to form malonyl-CoA. This Chlamydia muridarum (strain MoPn / Nigg) protein is Biotin carboxyl carrier protein of acetyl-CoA carboxylase (accB).